Reading from the N-terminus, the 288-residue chain is Probable ketoamine kinase VC_1539 (288 aa).

92–94 (NYL) is a binding site for ATP. The active-site Proton acceptor is D195.

This sequence belongs to the fructosamine kinase family.

In terms of biological role, ketoamine kinase that phosphorylates ketoamines on the third carbon of the sugar moiety to generate ketoamine 3-phosphate. The sequence is that of Probable ketoamine kinase VC_1539 from Vibrio cholerae serotype O1 (strain ATCC 39315 / El Tor Inaba N16961).